The primary structure comprises 66 residues: Large ribosomal subunit protein bL33c (66 aa).

The protein belongs to the bacterial ribosomal protein bL33 family.

The protein localises to the plastid. It localises to the chloroplast. In Illicium oligandrum (Star anise), this protein is Large ribosomal subunit protein bL33c.